Here is a 616-residue protein sequence, read N- to C-terminus: Dihydroxy-acid dehydratase (616 aa).

Residue Asp-81 participates in Mg(2+) binding. Cys-122 is a binding site for [2Fe-2S] cluster. The Mg(2+) site is built by Asp-123 and Lys-124. Position 124 is an N6-carboxylysine (Lys-124). Residue Cys-195 participates in [2Fe-2S] cluster binding. A Mg(2+)-binding site is contributed by Glu-491. Ser-517 serves as the catalytic Proton acceptor.

Belongs to the IlvD/Edd family. In terms of assembly, homodimer. The cofactor is [2Fe-2S] cluster. Requires Mg(2+) as cofactor.

The enzyme catalyses (2R)-2,3-dihydroxy-3-methylbutanoate = 3-methyl-2-oxobutanoate + H2O. It carries out the reaction (2R,3R)-2,3-dihydroxy-3-methylpentanoate = (S)-3-methyl-2-oxopentanoate + H2O. The protein operates within amino-acid biosynthesis; L-isoleucine biosynthesis; L-isoleucine from 2-oxobutanoate: step 3/4. It participates in amino-acid biosynthesis; L-valine biosynthesis; L-valine from pyruvate: step 3/4. In terms of biological role, functions in the biosynthesis of branched-chain amino acids. Catalyzes the dehydration of (2R,3R)-2,3-dihydroxy-3-methylpentanoate (2,3-dihydroxy-3-methylvalerate) into 2-oxo-3-methylpentanoate (2-oxo-3-methylvalerate) and of (2R)-2,3-dihydroxy-3-methylbutanoate (2,3-dihydroxyisovalerate) into 2-oxo-3-methylbutanoate (2-oxoisovalerate), the penultimate precursor to L-isoleucine and L-valine, respectively. The polypeptide is Dihydroxy-acid dehydratase (Methylocella silvestris (strain DSM 15510 / CIP 108128 / LMG 27833 / NCIMB 13906 / BL2)).